Consider the following 230-residue polypeptide: Ion-translocating oxidoreductase complex subunit E (230 aa).

6 consecutive transmembrane segments (helical) span residues 18 to 38 (ALVQLLGMCPLLAVTSTATNA), 39 to 59 (LGLGLATTLVLTLTNLTISTL), 63 to 83 (TPTEIRIPIYVMIIASVVSAV), 86 to 106 (LINAYAFGLYQSLGIFIPLIV), 128 to 148 (ALDGFAIGMGATGAMFVLGAM), and 182 to 202 (PFLLAMLPPGAFIGLGLMLAG).

This sequence belongs to the NqrDE/RnfAE family. As to quaternary structure, the complex is composed of six subunits: RsxA, RsxB, RsxC, RsxD, RsxE and RsxG.

Its subcellular location is the cell inner membrane. Its function is as follows. Part of a membrane-bound complex that couples electron transfer with translocation of ions across the membrane. Required to maintain the reduced state of SoxR. The chain is Ion-translocating oxidoreductase complex subunit E from Escherichia fergusonii (strain ATCC 35469 / DSM 13698 / CCUG 18766 / IAM 14443 / JCM 21226 / LMG 7866 / NBRC 102419 / NCTC 12128 / CDC 0568-73).